The following is a 439-amino-acid chain: Protein dumpy-20 (439 aa).

The interval 93 to 116 (GTLSDPSLHGSNSSSSTSDVGSSV) is disordered. The span at 96–116 (SDPSLHGSNSSSSTSDVGSSV) shows a compositional bias: low complexity. 2 consecutive BED-type zinc fingers follow at residues 135–184 (PTEN…YQKV) and 349–398 (KTEH…YNDV). Zn(2+)-binding residues include cysteine 154, cysteine 157, histidine 172, histidine 177, cysteine 368, cysteine 371, histidine 386, and histidine 391.

Involved in cuticle function and is essential for normal morphological development. In Caenorhabditis briggsae, this protein is Protein dumpy-20 (dpy-20).